Reading from the N-terminus, the 212-residue chain is Adenylate kinase (212 aa).

10 to 15 contacts ATP; the sequence is GAGKGT. The segment at 30-59 is NMP; the sequence is STGDMFRAAMANQTEMGRLAKSYIDKGELV. AMP-binding positions include Thr-31, Arg-36, 57–59, 86–89, and Gln-93; these read ELV and GYPR. The tract at residues 127–159 is LID; the sequence is GRIINRKTGETFHKVFNPPVDYKEEDYYQREDD. ATP-binding positions include Arg-128 and 137–138; that span reads TF. Positions 156 and 167 each coordinate AMP. Gln-195 serves as a coordination point for ATP.

The protein belongs to the adenylate kinase family. In terms of assembly, monomer.

The protein localises to the cytoplasm. The catalysed reaction is AMP + ATP = 2 ADP. The protein operates within purine metabolism; AMP biosynthesis via salvage pathway; AMP from ADP: step 1/1. Functionally, catalyzes the reversible transfer of the terminal phosphate group between ATP and AMP. Plays an important role in cellular energy homeostasis and in adenine nucleotide metabolism. This is Adenylate kinase from Streptococcus agalactiae serotype Ia (strain ATCC 27591 / A909 / CDC SS700).